Reading from the N-terminus, the 341-residue chain is Ribosomal RNA small subunit methyltransferase H (341 aa).

Residues 47-49, D64, F91, D109, and Q116 each bind S-adenosyl-L-methionine; that span reads GGY.

This sequence belongs to the methyltransferase superfamily. RsmH family.

The protein localises to the cytoplasm. It carries out the reaction cytidine(1402) in 16S rRNA + S-adenosyl-L-methionine = N(4)-methylcytidine(1402) in 16S rRNA + S-adenosyl-L-homocysteine + H(+). Its function is as follows. Specifically methylates the N4 position of cytidine in position 1402 (C1402) of 16S rRNA. The sequence is that of Ribosomal RNA small subunit methyltransferase H from Rhizobium leguminosarum bv. trifolii (strain WSM2304).